The following is a 332-amino-acid chain: Methionyl-tRNA formyltransferase (332 aa).

114-117 (SLLP) lines the (6S)-5,6,7,8-tetrahydrofolate pocket.

This sequence belongs to the Fmt family.

The enzyme catalyses L-methionyl-tRNA(fMet) + (6R)-10-formyltetrahydrofolate = N-formyl-L-methionyl-tRNA(fMet) + (6S)-5,6,7,8-tetrahydrofolate + H(+). Attaches a formyl group to the free amino group of methionyl-tRNA(fMet). The formyl group appears to play a dual role in the initiator identity of N-formylmethionyl-tRNA by promoting its recognition by IF2 and preventing the misappropriation of this tRNA by the elongation apparatus. This chain is Methionyl-tRNA formyltransferase, found in Corynebacterium aurimucosum (strain ATCC 700975 / DSM 44827 / CIP 107346 / CN-1) (Corynebacterium nigricans).